The chain runs to 406 residues: Imidazolonepropionase (406 aa).

Histidine 67 and histidine 69 together coordinate Fe(3+). Residues histidine 67 and histidine 69 each contribute to the Zn(2+) site. 3 residues coordinate 4-imidazolone-5-propanoate: arginine 76, tyrosine 139, and histidine 172. Tyrosine 139 is a binding site for N-formimidoyl-L-glutamate. Histidine 237 serves as a coordination point for Fe(3+). Residue histidine 237 participates in Zn(2+) binding. Residue glutamine 240 coordinates 4-imidazolone-5-propanoate. Aspartate 312 contacts Fe(3+). Aspartate 312 provides a ligand contact to Zn(2+). 2 residues coordinate N-formimidoyl-L-glutamate: asparagine 314 and glycine 316. Residue threonine 317 participates in 4-imidazolone-5-propanoate binding.

Belongs to the metallo-dependent hydrolases superfamily. HutI family. Requires Zn(2+) as cofactor. Fe(3+) serves as cofactor.

It is found in the cytoplasm. The enzyme catalyses 4-imidazolone-5-propanoate + H2O = N-formimidoyl-L-glutamate. It functions in the pathway amino-acid degradation; L-histidine degradation into L-glutamate; N-formimidoyl-L-glutamate from L-histidine: step 3/3. Catalyzes the hydrolytic cleavage of the carbon-nitrogen bond in imidazolone-5-propanoate to yield N-formimidoyl-L-glutamate. It is the third step in the universal histidine degradation pathway. This Paraburkholderia phymatum (strain DSM 17167 / CIP 108236 / LMG 21445 / STM815) (Burkholderia phymatum) protein is Imidazolonepropionase.